Consider the following 479-residue polypeptide: Adenosylhomocysteinase (479 aa).

Positions 66, 142, and 203 each coordinate substrate. 204–206 (TTT) provides a ligand contact to NAD(+). Residues Lys233 and Asp237 each coordinate substrate. NAD(+)-binding positions include Asn238, 267-272 (GYGDVG), Glu290, Asn325, 346-348 (IGH), and Asn394.

This sequence belongs to the adenosylhomocysteinase family. Requires NAD(+) as cofactor.

The protein localises to the cytoplasm. It catalyses the reaction S-adenosyl-L-homocysteine + H2O = L-homocysteine + adenosine. Its pathway is amino-acid biosynthesis; L-homocysteine biosynthesis; L-homocysteine from S-adenosyl-L-homocysteine: step 1/1. In terms of biological role, may play a key role in the regulation of the intracellular concentration of adenosylhomocysteine. This Nitratidesulfovibrio vulgaris (strain ATCC 29579 / DSM 644 / CCUG 34227 / NCIMB 8303 / VKM B-1760 / Hildenborough) (Desulfovibrio vulgaris) protein is Adenosylhomocysteinase.